Consider the following 103-residue polypeptide: Large ribosomal subunit protein bL21 (103 aa).

It belongs to the bacterial ribosomal protein bL21 family. In terms of assembly, part of the 50S ribosomal subunit. Contacts protein L20.

Functionally, this protein binds to 23S rRNA in the presence of protein L20. In Shewanella amazonensis (strain ATCC BAA-1098 / SB2B), this protein is Large ribosomal subunit protein bL21.